A 159-amino-acid polypeptide reads, in one-letter code: Cytochrome c-type biogenesis protein CcmE (159 aa).

At 1–23 (MNNSSLENSASLKVILKQRKKKR) the chain is on the cytoplasmic side. A helical; Signal-anchor for type II membrane protein membrane pass occupies residues 24 to 44 (LLIILLCCLVMAIAASLVVYA). Topologically, residues 45-159 (MRHAVSFFRM…RLKKHYSVEK (115 aa)) are periplasmic. Positions 138 and 142 each coordinate heme.

It belongs to the CcmE/CycJ family.

The protein localises to the cell inner membrane. Functionally, heme chaperone required for the biogenesis of c-type cytochromes. Transiently binds heme delivered by CcmC and transfers the heme to apo-cytochromes in a process facilitated by CcmF and CcmH. The polypeptide is Cytochrome c-type biogenesis protein CcmE (Bartonella tribocorum (strain CIP 105476 / IBS 506)).